Here is a 245-residue protein sequence, read N- to C-terminus: MAVRASFENNCEIGCFAKLTNSYCLVAIGGSENFYSVFEGELAGTIPVVHASIAGCRIIGRMCVGNRHGLLVPNNTTDQELQHIRNCLPDSVQIRRVEERLSALGNVTTCNDYVALVHPDLDRETEEILADVLKVEVFRQTVADQVLVGSYCVFSNQGGLVHPKTSIEDQDELSSLLQVPLVAGTVNRGSEVIAAGMVVNDWCAFCGLDTTSTELSVVESVFKLNEAQPSTIATSMRDSLIDSLT.

A Phosphotyrosine modification is found at Tyr-113. Thr-165 carries the phosphothreonine modification. Ser-166 is modified (phosphoserine). Ser-174 and Ser-175 each carry phosphoserine; by CK1. Ser-235 bears the Phosphoserine; by PKC mark. A phosphoserine mark is found at Ser-239 and Ser-243.

Belongs to the eIF-6 family. In terms of assembly, monomer. Associates with the 60S ribosomal subunit. Interacts with RACK1. Interacts with DICER1, AGO2, TARBP2, MOV10 and RPL7A; they form a large RNA-induced silencing complex (RISC). Post-translationally, phosphorylation at Ser-174 and Ser-175 by CSNK1D/CK1 promotes nuclear export. Ufmylated by UFL1.

The protein resides in the cytoplasm. It is found in the nucleus. Its subcellular location is the nucleolus. In terms of biological role, binds to the 60S ribosomal subunit and prevents its association with the 40S ribosomal subunit to form the 80S initiation complex in the cytoplasm. Behaves as a stimulatory translation initiation factor downstream insulin/growth factors. Is also involved in ribosome biogenesis. Associates with pre-60S subunits in the nucleus and is involved in its nuclear export. Cytoplasmic release of TIF6 from 60S subunits and nuclear relocalization is promoted by a RACK1 (RACK1)-dependent protein kinase C activity. In tissues responsive to insulin, controls fatty acid synthesis and glycolysis by exerting translational control of adipogenic transcription factors such as CEBPB, CEBPD and ATF4 that have G/C rich or uORF in their 5'UTR. Required for ROS-dependent megakaryocyte maturation and platelets formation, controls the expression of mitochondrial respiratory chain genes involved in reactive oxygen species (ROS) synthesis. Involved in miRNA-mediated gene silencing by the RNA-induced silencing complex (RISC). Required for both miRNA-mediated translational repression and miRNA-mediated cleavage of complementary mRNAs by RISC. Modulates cell cycle progression and global translation of pre-B cells, its activation seems to be rate-limiting in tumorigenesis and tumor growth. This chain is Eukaryotic translation initiation factor 6, found in Bos taurus (Bovine).